The chain runs to 111 residues: Urease subunit beta (111 aa).

The protein belongs to the urease beta subunit family. In terms of assembly, heterotrimer of UreA (gamma), UreB (beta) and UreC (alpha) subunits. Three heterotrimers associate to form the active enzyme.

The protein localises to the cytoplasm. The catalysed reaction is urea + 2 H2O + H(+) = hydrogencarbonate + 2 NH4(+). The protein operates within nitrogen metabolism; urea degradation; CO(2) and NH(3) from urea (urease route): step 1/1. The chain is Urease subunit beta from Psychrobacter cryohalolentis (strain ATCC BAA-1226 / DSM 17306 / VKM B-2378 / K5).